The chain runs to 273 residues: Phosphate import ATP-binding protein PstB (273 aa).

The segment at Met1–Asp20 is disordered. Residues Val27 to Ile268 form the ABC transporter domain. Gly59–Ser66 contributes to the ATP binding site.

The protein belongs to the ABC transporter superfamily. Phosphate importer (TC 3.A.1.7) family. In terms of assembly, the complex is composed of two ATP-binding proteins (PstB), two transmembrane proteins (PstC and PstA) and a solute-binding protein (PstS).

The protein localises to the cell inner membrane. It carries out the reaction phosphate(out) + ATP + H2O = ADP + 2 phosphate(in) + H(+). Its function is as follows. Part of the ABC transporter complex PstSACB involved in phosphate import. Responsible for energy coupling to the transport system. This chain is Phosphate import ATP-binding protein PstB, found in Nitrobacter winogradskyi (strain ATCC 25391 / DSM 10237 / CIP 104748 / NCIMB 11846 / Nb-255).